The sequence spans 302 residues: Sulfate adenylyltransferase subunit 2 (302 aa).

The protein belongs to the PAPS reductase family. CysD subfamily. In terms of assembly, heterodimer composed of CysD, the smaller subunit, and CysN.

It carries out the reaction sulfate + ATP + H(+) = adenosine 5'-phosphosulfate + diphosphate. Its pathway is sulfur metabolism; hydrogen sulfide biosynthesis; sulfite from sulfate: step 1/3. Its function is as follows. With CysN forms the ATP sulfurylase (ATPS) that catalyzes the adenylation of sulfate producing adenosine 5'-phosphosulfate (APS) and diphosphate, the first enzymatic step in sulfur assimilation pathway. APS synthesis involves the formation of a high-energy phosphoric-sulfuric acid anhydride bond driven by GTP hydrolysis by CysN coupled to ATP hydrolysis by CysD. The protein is Sulfate adenylyltransferase subunit 2 of Salmonella schwarzengrund (strain CVM19633).